Reading from the N-terminus, the 84-residue chain is Large ribosomal subunit protein bL28 (84 aa).

This sequence belongs to the bacterial ribosomal protein bL28 family.

The protein is Large ribosomal subunit protein bL28 of Clostridium perfringens (strain 13 / Type A).